A 312-amino-acid chain; its full sequence is Olfactory receptor 5p57 (312 aa).

Residues 1–25 (MEPGNYTVVTEFILLGLTDDITVSV) are Extracellular-facing. N5 carries an N-linked (GlcNAc...) asparagine glycan. The chain crosses the membrane as a helical span at residues 26 to 46 (ILFVMFLIVYSVTLMGNLNII). The Cytoplasmic segment spans residues 47-54 (VLIRTSPQ). The helical transmembrane segment at 55–75 (LHTPMYLFLSHLAFLDIGYSS) threads the bilayer. At 76–99 (SVTPIMLRGFLRKGTFIPVAGCVA) the chain is on the extracellular side. Cysteines 97 and 189 form a disulfide. The chain crosses the membrane as a helical span at residues 100–120 (QLCIVVAFGTSESFLLASMAY). The Cytoplasmic segment spans residues 121 to 133 (DRYVAICSPLLYS). The chain crosses the membrane as a helical span at residues 134–154 (TQMSSTVCILLVGTSYLGGWV). At 155–196 (NAWIFTGCSLNLSFCGPNKINHFFCDYSPLLKLSCSHDFSFE) the chain is on the extracellular side. N165 carries N-linked (GlcNAc...) asparagine glycosylation. Residues 197–217 (VIPAISSGSIIVVTVFIIALS) form a helical membrane-spanning segment. Residues 218-237 (YVYILVSILKMRSTEGRQKA) lie on the Cytoplasmic side of the membrane. Residues 238–258 (FSTCTSHLTAVTLFFGTITFI) form a helical membrane-spanning segment. Topologically, residues 259–271 (YVMPQSSYSTDQN) are extracellular. The chain crosses the membrane as a helical span at residues 272 to 292 (KVVSVFYTVVIPMLNPLIYSF). Topologically, residues 293 to 312 (RNKEVKEAMKKLIAKTHWWS) are cytoplasmic.

Belongs to the G-protein coupled receptor 1 family.

It localises to the cell membrane. Functionally, probable odorant receptor, which recognizes only aliphatic alcohols, suggesting that it may convey a 'woody' or 'sweet' sour. The protein is Olfactory receptor 5p57 of Mus musculus (Mouse).